A 257-amino-acid polypeptide reads, in one-letter code: NAD-capped RNA hydrolase NudC (257 aa).

Substrate is bound by residues K25 and R69. The Zn(2+) site is built by C98 and C101. Residue E111 participates in substrate binding. Positions 116 and 119 each coordinate Zn(2+). Substrate is bound at residue Y124. In terms of domain architecture, Nudix hydrolase spans 125-248 (PQIAPCIIVA…TVARRLIEDT (124 aa)). 3 residues coordinate a divalent metal cation: A158, E174, and E178. The Nudix box motif lies at 159 to 180 (GFVEVGETLEQAVAREVMEESG). Residue 192-199 (QPWPFPQS) coordinates substrate. A divalent metal cation is bound at residue E219. Residue A241 participates in substrate binding.

The protein belongs to the Nudix hydrolase family. NudC subfamily. As to quaternary structure, homodimer. The cofactor is Mg(2+). Mn(2+) is required as a cofactor. Requires Zn(2+) as cofactor.

The enzyme catalyses a 5'-end NAD(+)-phospho-ribonucleoside in mRNA + H2O = a 5'-end phospho-adenosine-phospho-ribonucleoside in mRNA + beta-nicotinamide D-ribonucleotide + 2 H(+). It carries out the reaction NAD(+) + H2O = beta-nicotinamide D-ribonucleotide + AMP + 2 H(+). It catalyses the reaction NADH + H2O = reduced beta-nicotinamide D-ribonucleotide + AMP + 2 H(+). Its function is as follows. mRNA decapping enzyme that specifically removes the nicotinamide adenine dinucleotide (NAD) cap from a subset of mRNAs by hydrolyzing the diphosphate linkage to produce nicotinamide mononucleotide (NMN) and 5' monophosphate mRNA. The NAD-cap is present at the 5'-end of some mRNAs and stabilizes RNA against 5'-processing. Has preference for mRNAs with a 5'-end purine. Catalyzes the hydrolysis of a broad range of dinucleotide pyrophosphates. This is NAD-capped RNA hydrolase NudC from Escherichia coli (strain 55989 / EAEC).